The primary structure comprises 102 residues: Small ribosomal subunit protein uS10 (102 aa).

This sequence belongs to the universal ribosomal protein uS10 family. As to quaternary structure, part of the 30S ribosomal subunit.

Functionally, involved in the binding of tRNA to the ribosomes. The sequence is that of Small ribosomal subunit protein uS10 from Lacticaseibacillus casei (strain BL23) (Lactobacillus casei).